The chain runs to 189 residues: Putative manganese efflux pump MntP (189 aa).

6 helical membrane passes run 3–23, 41–61, 65–85, 104–124, 132–152, and 165–185; these read LSAT…ASIG, LIFG…GLFA, ILEW…CRMI, FWVL…IGVG, IVHT…LGML, and AEII…YEHI.

The protein belongs to the MntP (TC 9.B.29) family.

It localises to the cell inner membrane. Functionally, probably functions as a manganese efflux pump. The sequence is that of Putative manganese efflux pump MntP from Yersinia enterocolitica serotype O:8 / biotype 1B (strain NCTC 13174 / 8081).